The following is a 201-amino-acid chain: MQLGLDFNLVEDLVAGVDEVGRGPLCGPVVTAAVILDPSRPILGLNDSKKLSEARREALFEEIREKALAWCIARAEVEEIDRLNILHATMLAMQRAVEGLSVTPRLALIDGNRCPKLAVPSAPVVKGDSQVPAIAAASILAKVSRDREMVELDRVYPGYGMAGHKGYPTAVHLEALSRLGPTPIHRRSFAPVRELLDVPVQ.

Positions 12-201 constitute an RNase H type-2 domain; it reads DLVAGVDEVG…VRELLDVPVQ (190 aa). 3 residues coordinate a divalent metal cation: D18, E19, and D110.

This sequence belongs to the RNase HII family. Mn(2+) is required as a cofactor. Mg(2+) serves as cofactor.

The protein resides in the cytoplasm. The enzyme catalyses Endonucleolytic cleavage to 5'-phosphomonoester.. Endonuclease that specifically degrades the RNA of RNA-DNA hybrids. This Pseudomonas aeruginosa (strain UCBPP-PA14) protein is Ribonuclease HII.